Reading from the N-terminus, the 142-residue chain is Acidic phospholipase A2 Bc-PL (142 aa).

Positions 1–9 are cleaved as a signal peptide; it reads AVCVSLLGA. The propeptide occupies 10-17; that stretch reads ANIPPQPL. Disulfide bonds link Cys28–Cys94, Cys44–Cys141, Cys46–Cys62, Cys61–Cys122, Cys68–Cys115, Cys78–Cys108, and Cys101–Cys113. Ca(2+)-binding residues include Tyr45, Gly47, and Gly49. The active site involves His65. Asp66 lines the Ca(2+) pocket. Asp116 is an active-site residue.

The protein belongs to the phospholipase A2 family. Group I subfamily. D49 sub-subfamily. Ca(2+) is required as a cofactor. As to expression, expressed by the venom gland.

Its subcellular location is the secreted. The enzyme catalyses a 1,2-diacyl-sn-glycero-3-phosphocholine + H2O = a 1-acyl-sn-glycero-3-phosphocholine + a fatty acid + H(+). In terms of biological role, PLA2 catalyzes the calcium-dependent hydrolysis of the 2-acyl groups in 3-sn-phosphoglycerides. The sequence is that of Acidic phospholipase A2 Bc-PL from Bungarus candidus (Malayan krait).